The primary structure comprises 320 residues: Nucleotide-binding protein Psyc_0118 (320 aa).

An ATP-binding site is contributed by 32–39 (GRSGSGKT). Residue 82–85 (DIRT) coordinates GTP.

Belongs to the RapZ-like family.

Its function is as follows. Displays ATPase and GTPase activities. The protein is Nucleotide-binding protein Psyc_0118 of Psychrobacter arcticus (strain DSM 17307 / VKM B-2377 / 273-4).